We begin with the raw amino-acid sequence, 327 residues long: Acetyl-coenzyme A carboxylase carboxyl transferase subunit beta (327 aa).

The CoA carboxyltransferase N-terminal domain occupies 24-293 (LWIKCPDTGQ…LTVTTAVEAP (270 aa)). Positions 293-311 (PAEAAAKAEPEATTTEQPG) are enriched in low complexity. Positions 293-327 (PAEAAAKAEPEATTTEQPGAPAPTEPPAQPAAPQA) are disordered. The segment covering 312–327 (APAPTEPPAQPAAPQA) has biased composition (pro residues).

Belongs to the AccD/PCCB family. As to quaternary structure, acetyl-CoA carboxylase is a heterohexamer composed of biotin carboxyl carrier protein (AccB), biotin carboxylase (AccC) and two subunits each of ACCase subunit alpha (AccA) and ACCase subunit beta (AccD).

The protein localises to the cytoplasm. It catalyses the reaction N(6)-carboxybiotinyl-L-lysyl-[protein] + acetyl-CoA = N(6)-biotinyl-L-lysyl-[protein] + malonyl-CoA. It participates in lipid metabolism; malonyl-CoA biosynthesis; malonyl-CoA from acetyl-CoA: step 1/1. Functionally, component of the acetyl coenzyme A carboxylase (ACC) complex. Biotin carboxylase (BC) catalyzes the carboxylation of biotin on its carrier protein (BCCP) and then the CO(2) group is transferred by the transcarboxylase to acetyl-CoA to form malonyl-CoA. This is Acetyl-coenzyme A carboxylase carboxyl transferase subunit beta from Rhodopseudomonas palustris (strain ATCC BAA-98 / CGA009).